A 179-amino-acid chain; its full sequence is MAELATIARPYAEALFRVAEGGDISAWSTLVQELAQVAQLPEVLSVASSPKVSRAQVAELLLATLKSPLASGAQAKNFVQMLVDNHRIALLPEIAVQFEALKNAREGAADVQIVSAFPLEGAQLAELVTSLERKFKRKLKPAVEVDSSLIGGVRVTVGDEVLDTSVRARLAGMQAALTA.

This sequence belongs to the ATPase delta chain family. F-type ATPases have 2 components, F(1) - the catalytic core - and F(0) - the membrane proton channel. F(1) has five subunits: alpha(3), beta(3), gamma(1), delta(1), epsilon(1). F(0) has three main subunits: a(1), b(2) and c(10-14). The alpha and beta chains form an alternating ring which encloses part of the gamma chain. F(1) is attached to F(0) by a central stalk formed by the gamma and epsilon chains, while a peripheral stalk is formed by the delta and b chains.

It localises to the cell inner membrane. Its function is as follows. F(1)F(0) ATP synthase produces ATP from ADP in the presence of a proton or sodium gradient. F-type ATPases consist of two structural domains, F(1) containing the extramembraneous catalytic core and F(0) containing the membrane proton channel, linked together by a central stalk and a peripheral stalk. During catalysis, ATP synthesis in the catalytic domain of F(1) is coupled via a rotary mechanism of the central stalk subunits to proton translocation. This protein is part of the stalk that links CF(0) to CF(1). It either transmits conformational changes from CF(0) to CF(1) or is implicated in proton conduction. The protein is ATP synthase subunit delta of Burkholderia thailandensis (strain ATCC 700388 / DSM 13276 / CCUG 48851 / CIP 106301 / E264).